A 693-amino-acid polypeptide reads, in one-letter code: Triadin (693 aa).

At 1 to 47 (MTEITAEGNASTTTTVIDNKNGCIPKSPGKVLKRSVTEDIVTTFSSP) the chain is on the cytoplasmic side. The helical transmembrane segment at 48 to 68 (AAWLLVIALIITWSAVAIVMF) threads the bilayer. Residues 69–693 (DLVDYKNFSA…NSPGQKQQEQ (625 aa)) lie on the Lumenal side of the membrane. Over residues 117-130 (EGDEDDEDADEDID) the composition is skewed to acidic residues. 3 disordered regions span residues 117–260 (EGDE…AVHE), 278–649 (GDLK…QTRP), and 666–693 (FQFP…QQEQ). Basic and acidic residues-rich tracts occupy residues 131 to 241 (KGEI…KETP) and 249 to 260 (KKDDKEMPAVHE). Position 301 is a phosphoserine (serine 301). The segment covering 305–352 (LEEKEKEEKKKMEKKDTSDTKKKEKEVKKKSEETTIDGKGKEPGKPPE) has biased composition (basic and acidic residues). A compositionally biased stretch (polar residues) spans 354 to 364 (KQMTAKLTTQA). Basic and acidic residues-rich tracts occupy residues 366–427 (ARKD…KEEI) and 438–502 (GKKE…KEAK). A glycan (N-linked (GlcNAc...) asparagine) is linked at asparagine 515. Basic and acidic residues-rich tracts occupy residues 526-547 (VKPE…DKPK) and 558-579 (DSGK…REEN). Asparagine 584 is a glycosylation site (N-linked (GlcNAc...) asparagine). Basic and acidic residues predominate over residues 587–637 (KAEKPGKIPKDSKEAPASKKDKEDSKEAPTSKKDKEDSKDVPHSKKDKEVT). Over residues 672–693 (PVQQPGENPGKTNSPGQKQQEQ) the composition is skewed to polar residues.

In terms of assembly, homooligomer of variable subunit number; disulfide-linked. Interacts with CASQ1 and RYR1 in skeletal muscle. Interacts with CASQ2. Phosphorylated by CaMK2. In terms of processing, N-glycosylated. Detected in heart (at protein level). Detected in heart.

Its subcellular location is the sarcoplasmic reticulum membrane. In terms of biological role, contributes to the regulation of lumenal Ca2+ release via the sarcoplasmic reticulum calcium release channels RYR1 and RYR2, a key step in triggering skeletal and heart muscle contraction. Required for normal organization of the triad junction, where T-tubules and the sarcoplasmic reticulum terminal cisternae are in close contact. Required for normal skeletal muscle strength. Plays a role in excitation-contraction coupling in the heart and in regulating the rate of heart beats. This is Triadin from Mus musculus (Mouse).